Consider the following 117-residue polypeptide: Large ribosomal subunit protein uL18 (117 aa).

This sequence belongs to the universal ribosomal protein uL18 family. As to quaternary structure, part of the 50S ribosomal subunit; part of the 5S rRNA/L5/L18/L25 subcomplex. Contacts the 5S and 23S rRNAs.

Functionally, this is one of the proteins that bind and probably mediate the attachment of the 5S RNA into the large ribosomal subunit, where it forms part of the central protuberance. This Aliivibrio fischeri (strain ATCC 700601 / ES114) (Vibrio fischeri) protein is Large ribosomal subunit protein uL18.